A 143-amino-acid polypeptide reads, in one-letter code: Small ribosomal subunit protein uS11c (143 aa).

This sequence belongs to the universal ribosomal protein uS11 family. As to quaternary structure, part of the 30S ribosomal subunit.

It localises to the plastid. It is found in the chloroplast. This chain is Small ribosomal subunit protein uS11c, found in Zea mays (Maize).